The following is a 581-amino-acid chain: Chaperonin GroEL 1 (581 aa).

Residues 29 to 32, 86 to 90, G413, and D492 each bind ATP; these read TIGP and DGTTT. Residues 522–543 form a disordered region; it reads PEPEPAAPGGPSGDPMGGMGGM. The segment covering 531 to 543 has biased composition (gly residues); sequence GPSGDPMGGMGGM.

Belongs to the chaperonin (HSP60) family. In terms of assembly, forms a cylinder of 14 subunits composed of two heptameric rings stacked back-to-back. Interacts with the co-chaperonin GroES.

It is found in the cytoplasm. The enzyme catalyses ATP + H2O + a folded polypeptide = ADP + phosphate + an unfolded polypeptide.. Functionally, together with its co-chaperonin GroES, plays an essential role in assisting protein folding. The GroEL-GroES system forms a nano-cage that allows encapsulation of the non-native substrate proteins and provides a physical environment optimized to promote and accelerate protein folding. The chain is Chaperonin GroEL 1 from Prochlorococcus marinus (strain MIT 9215).